The primary structure comprises 233 residues: Purine nucleoside phosphorylase DeoD-type (233 aa).

H4 contacts a purine D-ribonucleoside. Phosphate is bound by residues G20, R24, R43, and 87–90; that span reads RVGT. A purine D-ribonucleoside is bound by residues 178–180 and 202–203; these read EME and SD. The active-site Proton donor is D203.

It belongs to the PNP/UDP phosphorylase family. Homohexamer; trimer of homodimers.

The catalysed reaction is a purine D-ribonucleoside + phosphate = a purine nucleobase + alpha-D-ribose 1-phosphate. It catalyses the reaction a purine 2'-deoxy-D-ribonucleoside + phosphate = a purine nucleobase + 2-deoxy-alpha-D-ribose 1-phosphate. Catalyzes the reversible phosphorolytic breakdown of the N-glycosidic bond in the beta-(deoxy)ribonucleoside molecules, with the formation of the corresponding free purine bases and pentose-1-phosphate. The protein is Purine nucleoside phosphorylase DeoD-type of Listeria innocua serovar 6a (strain ATCC BAA-680 / CLIP 11262).